The chain runs to 163 residues: Phosphopantetheine adenylyltransferase (163 aa).

Residue Thr11 participates in substrate binding. ATP is bound by residues 11–12 (TF) and His19. Substrate is bound by residues Lys43, Leu75, and Arg89. ATP is bound by residues 90-92 (GLR), Glu100, and 125-131 (YMFISAT).

The protein belongs to the bacterial CoaD family. Homohexamer. It depends on Mg(2+) as a cofactor.

It is found in the cytoplasm. It carries out the reaction (R)-4'-phosphopantetheine + ATP + H(+) = 3'-dephospho-CoA + diphosphate. Its pathway is cofactor biosynthesis; coenzyme A biosynthesis; CoA from (R)-pantothenate: step 4/5. Reversibly transfers an adenylyl group from ATP to 4'-phosphopantetheine, yielding dephospho-CoA (dPCoA) and pyrophosphate. The chain is Phosphopantetheine adenylyltransferase from Aromatoleum aromaticum (strain DSM 19018 / LMG 30748 / EbN1) (Azoarcus sp. (strain EbN1)).